Here is a 435-residue protein sequence, read N- to C-terminus: Xylose isomerase (435 aa).

Residues His100 and Asp103 contribute to the active site. Residues Glu231, Glu267, His270, Asp295, Asp306, Asp308, and Asp338 each contribute to the Mg(2+) site.

The protein belongs to the xylose isomerase family. As to quaternary structure, homotetramer. It depends on Mg(2+) as a cofactor.

It is found in the cytoplasm. The catalysed reaction is alpha-D-xylose = alpha-D-xylulofuranose. This chain is Xylose isomerase, found in Brucella anthropi (strain ATCC 49188 / DSM 6882 / CCUG 24695 / JCM 21032 / LMG 3331 / NBRC 15819 / NCTC 12168 / Alc 37) (Ochrobactrum anthropi).